The following is a 405-amino-acid chain: Potassium channel subfamily K member 13 (405 aa).

At 1 to 19 (MAGRGCSCSPGHLNEDNAR) the chain is on the cytoplasmic side. A helical membrane pass occupies residues 20–40 (FLLLAGLILLYLLGGAAVFSA). 2 N-linked (GlcNAc...) asparagine glycosylation sites follow: asparagine 59 and asparagine 65. Positions 95–115 (WDFTGAFYFVGTVVTTIGFGM) form an intramembrane region, pore-forming. 3 residues coordinate K(+): threonine 110, isoleucine 111, and glycine 112. Residues 110 to 115 (TIGFGM) form a selectivity filter 1 region. A helical membrane pass occupies residues 125–145 (VFLIFYGLIGCASTILFFNLF). Residues 146 to 193 (LERLITVIAYVMRTCHHQQLRRRGTVARDNRKAPRKGEADSLAGWKPS) lie on the Cytoplasmic side of the membrane. A helical membrane pass occupies residues 194–214 (VYYVMLILCLASVAISCGASA). Residues 224 to 244 (YFDSVYFCFVASSTIGFGDLV) constitute an intramembrane region (pore-forming). 4 residues coordinate K(+): threonine 237, isoleucine 238, glycine 239, and phenylalanine 240. The segment at 237–242 (TIGFGD) is selectivity filter 2. A helical transmembrane segment spans residues 263 to 283 (FFILMGVCCIYSMFNVISILI). The Cytoplasmic portion of the chain corresponds to 284 to 405 (KQTVNWILRK…NRLAETSGDR (122 aa)).

The protein belongs to the two pore domain potassium channel (TC 1.A.1.8) family. As to quaternary structure, homodimer. Heterodimer with KCNK12. Ubiquitous. In brain expression is rather low and restricted to the olfactory bulb and tubercle, to the ventromedial hypothalamic nucleus, lateral septal nucleus dorsal, lateral mammillary nucleus, lateral parabrachial nuclei, reticular nucleus and reunions nuclei.

The protein localises to the cell membrane. The catalysed reaction is K(+)(in) = K(+)(out). With respect to regulation, the channel currents are activated by arachidonic acid, inhibited by volatile anesthetic halothane, partially inhibited by Ba(2+) ions and only weakly inhibited by extracellular acidification to pH 6. K(+) channel that conducts outward rectifying tonic currents potentiated by purinergic signals. Homo- and heterodimerizes to form functional channels with distinct regulatory and gating properties. Contributes most of K(+) currents at the plasma membrane of resting microglia. Maintains a depolarized membrane potential required for proper ramified microglia morphology and phagocytosis, selectively mediating microglial pruning of presynaptic compartments at hippocampal excitatory synapses. Upon local release of ATP caused by neuronal injury or infection, it is potentiated by P2RY12 and P2RX7 receptor signaling and contributes to ATP-triggered K(+) efflux underlying microglial NLRP3 inflammasome assembly and IL1B release. The polypeptide is Potassium channel subfamily K member 13 (Rattus norvegicus (Rat)).